Reading from the N-terminus, the 216-residue chain is ATP synthase subunit C lysine N-methyltransferase (216 aa).

Position 1 is an N-acetylmethionine (methionine 1). Basic and acidic residues predominate over residues 1-12 (MERGETPEEERQ). Residues 1-25 (MERGETPEEERQSGCVLPTSPESDS) are disordered. The chain crosses the membrane as a helical span at residues 31-50 (WGFLITGVIGGALVTVYAVT). The required for mitochondrial location stretch occupies residues 51–85 (TPFIAPALRKVCLPFVPATSRQVENVVKMLQHRRG).

This sequence belongs to the ANT/ATPSC lysine N-methyltransferase family.

The protein localises to the mitochondrion membrane. The catalysed reaction is L-lysyl-[protein] + 3 S-adenosyl-L-methionine = N(6),N(6),N(6)-trimethyl-L-lysyl-[protein] + 3 S-adenosyl-L-homocysteine + 3 H(+). In terms of biological role, mitochondrial protein-lysine N-methyltransferase that trimethylates ATP synthase subunit C, ATP5MC1 and ATP5MC2. Trimethylation is required for proper incorporation of the C subunit into the ATP synthase complex and mitochondrial respiration. Promotes chronic pain. Involved in persistent inflammatory and neuropathic pain: methyltransferase activity in the mitochondria of sensory neurons promotes chronic pain via a pathway that depends on the production of reactive oxygen species (ROS) and on the engagement of spinal cord microglia. The sequence is that of ATP synthase subunit C lysine N-methyltransferase (Atpsckmt) from Rattus norvegicus (Rat).